The following is a 207-amino-acid chain: Holliday junction branch migration complex subunit RuvA (207 aa).

Positions 1–65 (MIGRIRGVIL…EDAQLLYGFN (65 aa)) are domain I. Residues 66 to 143 (QKQERALFRE…KGLNGDLFEQ (78 aa)) form a domain II region. A flexible linker region spans residues 144 to 158 (NGDIELPASASSKAP). The domain III stretch occupies residues 159–207 (SAADIEAEASAALIALGYKPQEAAKMISRVATAGADSETLIKEALRAAI).

This sequence belongs to the RuvA family. In terms of assembly, homotetramer. Forms an RuvA(8)-RuvB(12)-Holliday junction (HJ) complex. HJ DNA is sandwiched between 2 RuvA tetramers; dsDNA enters through RuvA and exits via RuvB. An RuvB hexamer assembles on each DNA strand where it exits the tetramer. Each RuvB hexamer is contacted by two RuvA subunits (via domain III) on 2 adjacent RuvB subunits; this complex drives branch migration. In the full resolvosome a probable DNA-RuvA(4)-RuvB(12)-RuvC(2) complex forms which resolves the HJ.

The protein localises to the cytoplasm. The RuvA-RuvB-RuvC complex processes Holliday junction (HJ) DNA during genetic recombination and DNA repair, while the RuvA-RuvB complex plays an important role in the rescue of blocked DNA replication forks via replication fork reversal (RFR). RuvA specifically binds to HJ cruciform DNA, conferring on it an open structure. The RuvB hexamer acts as an ATP-dependent pump, pulling dsDNA into and through the RuvAB complex. HJ branch migration allows RuvC to scan DNA until it finds its consensus sequence, where it cleaves and resolves the cruciform DNA. The sequence is that of Holliday junction branch migration complex subunit RuvA from Proteus mirabilis (strain HI4320).